The following is a 185-amino-acid chain: Peptidyl-tRNA hydrolase (185 aa).

TRNA is bound at residue Phe12. His17 serves as the catalytic Proton acceptor. The tRNA site is built by Tyr61, Asn63, and Asn109.

This sequence belongs to the PTH family. Monomer.

The protein localises to the cytoplasm. It carries out the reaction an N-acyl-L-alpha-aminoacyl-tRNA + H2O = an N-acyl-L-amino acid + a tRNA + H(+). Its function is as follows. Hydrolyzes ribosome-free peptidyl-tRNAs (with 1 or more amino acids incorporated), which drop off the ribosome during protein synthesis, or as a result of ribosome stalling. Functionally, catalyzes the release of premature peptidyl moieties from peptidyl-tRNA molecules trapped in stalled 50S ribosomal subunits, and thus maintains levels of free tRNAs and 50S ribosomes. The protein is Peptidyl-tRNA hydrolase of Borrelia garinii subsp. bavariensis (strain ATCC BAA-2496 / DSM 23469 / PBi) (Borreliella bavariensis).